We begin with the raw amino-acid sequence, 202 residues long: Large ribosomal subunit protein bL25 (202 aa).

The tract at residues 1–21 (MSKESYELKAEARERVGKGSS) is disordered.

The protein belongs to the bacterial ribosomal protein bL25 family. CTC subfamily. Part of the 50S ribosomal subunit; part of the 5S rRNA/L5/L18/L25 subcomplex. Contacts the 5S rRNA. Binds to the 5S rRNA independently of L5 and L18.

In terms of biological role, this is one of the proteins that binds to the 5S RNA in the ribosome where it forms part of the central protuberance. The sequence is that of Large ribosomal subunit protein bL25 from Agrobacterium fabrum (strain C58 / ATCC 33970) (Agrobacterium tumefaciens (strain C58)).